Consider the following 201-residue polypeptide: Transgelin (201 aa).

An N-acetylalanine modification is found at A2. The Calponin-homology (CH) domain maps to 24 to 137; it reads EELEERLVEW…RTVMALGSLA (114 aa). A could be involved in actin-binding region spans residues 154–161; the sequence is KKAQEHKR. S166 carries the post-translational modification Phosphoserine. At K172 the chain carries N6-acetyllysine. A Calponin-like repeat occupies 175–200; sequence IGLQMGSNRGASQAGMTGYGRPRQII. S181 carries the phosphoserine modification. R183 bears the Omega-N-methylarginine mark.

Belongs to the calponin family. Smooth muscle and mesenchymal cells but not in skeletal muscle or lymphocytes.

The protein resides in the cytoplasm. Functionally, actin cross-linking/gelling protein. This Rattus norvegicus (Rat) protein is Transgelin (Tagln).